We begin with the raw amino-acid sequence, 1030 residues long: MSGKRAVLNKDLFFQRAERLYEHWEKGADGLDSIKSLAFVYGETDNPYTKTSALFTWLFGHEIADTVLLLLKDHIYILGSNRKVEFFGSVTGDNQSSGKVPTVSTLLRDKTDKDAGNFEKLIDHIKSAGGDVGNFVKEKFSSEFVSSWNKALEEGGVNKNDVTLAFTHLFAVKDDKEMDLIRKSAQATTASWTAARARYVEIIDQEKRVRHSVLSNEFAAFMKDSKVQQALAKYEADTCYDPIVMSGGNYSFKWNHESSESHLHSQFGTIITSFGARLSEYCTNLTRTMLIFPSSELETAYEAILAAELAVIAALKPGAKLSDVYKIGIDTLTEKSPKLAETLNKKELGFATGIEFRESRLAISAKCDEVVKAGMVFIVYIGVDSIPNKNKGEKGKPAAIAISDTILVKEEGDNEILTEKAKSRLKSNVIKFKEEQENREAEKDNDQKKMLGRGQRSVVLTDQTRNKTTNEELRKERQKELGVQLNELAKARLSKQGGGTDEKKSKKSNVSYKTEERFPQDADVQKMLIFVDRKYDSVVVPIFGIPVPFHISMIKNCSQSVEGDFTYLRINFATPGSQVGKDSGQFPHPLAHYMKELTFRASNIKDHHSDSTAPSHNLSTAFRLIKEMQKRFKTEEAEEREKEGAVKQDKLILSQNKLNPKLKDLLIRPNIIQKRITGSLEAHTNGFRYTSLRGDRIDVLYNNIKHAFFQPCDNEMIILLHFHLKNPVLWGKKKYKDVQFYTEVGEITTDLGKYHHMQDRDDMQSEQQEREMRRRLNAAFNSFCEKVSRLTNDQFEFDSPFAGLGFFGVPYRSATTLKPTASCLVNLTEWPTFIVTLSEVELVHFERVSLQLKNFDMVFIFKDYKIKPQMVAQIPMSSIDKIKEWLHTCDIWYSEGIQSLNWAKVMKTITDDLEAFFEEGGWSFLNVESDNEEAMDDSDDSDAYDPEEEDASAGSGSESDEDESEGEETESDDDDEGSLDSDESEGKDWSDLEEEAANADKRREVEEPSRDRDRKRPHSSKSGPSHKRRK.

A coiled-coil region spans residues 424–445 (RLKSNVIKFKEEQENREAEKDN). Basic and acidic residues-rich tracts occupy residues 435–449 (EQEN…DQKK) and 464–477 (TRNK…RKER). Disordered stretches follow at residues 435–477 (EQEN…RKER) and 491–514 (ARLS…SYKT). Residues 623-645 (RLIKEMQKRFKTEEAEEREKEGA) adopt a coiled-coil conformation. The segment at 927–1030 (VESDNEEAMD…KSGPSHKRRK (104 aa)) is disordered. Acidic residues-rich tracts occupy residues 929 to 951 (SDNE…EEDA) and 958 to 983 (ESDE…DSDE). Positions 987–1007 (KDWSDLEEEAANADKRREVEE) form a coiled coil. Residues 998–1014 (NADKRREVEEPSRDRDR) are compositionally biased toward basic and acidic residues. Basic residues predominate over residues 1015 to 1030 (KRPHSSKSGPSHKRRK).

The protein belongs to the peptidase M24 family. SPT16 subfamily. As to quaternary structure, component of the FACT complex, a stable heterodimer of spt-16 and hmg-3 or hmg-4. Expressed in the germline and somatic cells.

It is found in the nucleus. Its subcellular location is the chromosome. In terms of biological role, component of the FACT complex, a general chromatin factor that acts to reorganize nucleosomes. The FACT complex is involved in multiple processes that require DNA as a template such as mRNA elongation, DNA replication and DNA repair. During transcription elongation the FACT complex acts as a histone chaperone that both destabilizes and restores nucleosomal structure. It facilitates the passage of RNA polymerase II and transcription by promoting the dissociation of one histone H2A-H2B dimer from the nucleosome, then subsequently promotes the reestablishment of the nucleosome following the passage of RNA polymerase II. In embryos, promotes cell cycle progression and chromosomal segregation. Plays a role in the development of the anterior pharynx during embryonic development. In Caenorhabditis elegans, this protein is FACT complex subunit spt-16.